Consider the following 1360-residue polypeptide: Zinc finger protein GLI1 (1360 aa).

The segment at 198 to 245 (DTIGSKRLEDGSEGDISSPASVGTQDPLLGLLDGRDDLEKDDGKHEPE) is disordered. Residues 230–245 (DGRDDLEKDDGKHEPE) show a composition bias toward basic and acidic residues. The segment at 250-275 (TNCHWESCTKEFDTQEHLVHHINNEH) adopts a C2H2-type 1 zinc-finger fold. Residues 298–306 (KAQYMLVVH) are interaction with DNA. 3 consecutive C2H2-type zinc fingers follow at residues 316–340 (HKCT…LRSH), 346–371 (YVCE…NRTH), and 377–402 (YVCK…KTVH). 2 interaction with DNA regions span residues 360-365 (ASDRAK) and 390-396 (DPSSLRK). Disordered regions lie at residues 390 to 434 (DPSS…NVKG), 457 to 500 (ITLK…SFED), 718 to 740 (IIHP…RTGG), and 1120 to 1213 (YMNY…IQPQ). Over residues 461 to 473 (SQPSPGGQSSCSS) the composition is skewed to low complexity. The span at 474–496 (ERSPLGSTNNNDSGVEMNANTGG) shows a compositional bias: polar residues. The segment covering 1134–1143 (SPSSQDSQSS) has biased composition (low complexity). Polar residues predominate over residues 1173–1190 (RQHSVSSQSTYMGSPNQL).

Belongs to the GLI C2H2-type zinc-finger protein family.

The protein localises to the cytoplasm. Its subcellular location is the nucleus. Its function is as follows. Acts as a transcriptional activator. Binds to the DNA consensus sequence 5'-GACCACCCA-3'. May regulate the transcription of specific genes during normal development. Mediates SHH signaling. Plays a role in cell proliferation and differentiation via its role in SHH signaling. In Xenopus laevis (African clawed frog), this protein is Zinc finger protein GLI1 (gli1).